A 2159-amino-acid chain; its full sequence is ATP-binding cassette sub-family A member 7 (2159 aa).

A helical membrane pass occupies residues 22 to 42; it reads PIQLLVELLWPLFLFFILVAV. Residues 43-546 lie on the Extracellular side of the membrane; it reads RHSHPPLEHH…DVFLRVLSRS (504 aa). C75 and C222 are disulfide-bonded. A glycan (N-linked (GlcNAc...) asparagine) is linked at N309. 6 consecutive transmembrane segments (helical) span residues 547–567, 590–610, 623–643, 652–672, 678–698, and 732–752; these read LPLF…KAVV, LGWF…LVLV, VVIF…SFLL, LAAA…VLCV, LHLG…GFGC, and AFLL…EAVC. In terms of domain architecture, ABC transporter 1 spans 804-1035; sequence VSIRGLKKHF…LGCGYYLTLV (232 aa). An ATP-binding site is contributed by 838-845; sequence GHNGAGKT. Residues 846–866 form a helical membrane-spanning segment; sequence TTLSILSGLFPPSSGSASILG. Disordered stretches follow at residues 1042–1088 and 1172–1192; these read VTHD…GAVP and GGDS…PTGP. Residues 1044 to 1061 show a composition bias toward basic and acidic residues; it reads HDAKGDSEDPRREKKSDG. Residues 1062–1081 are compositionally biased toward polar residues; the sequence is NGRTSDTAFTRGTSDKSNQA. The chain crosses the membrane as a helical span at residues 1246–1266; it reads VVLPALFVGLALFFSLIVPPF. At 1267–1551 the chain is on the extracellular side; it reads GQYPPLQLSP…TLIASSVDVL (285 aa). C1359 and C1373 form a disulfide bridge. Transmembrane regions (helical) follow at residues 1552–1572, 1598–1618, 1635–1655, 1663–1683, and 1743–1763; these read VSIC…LVLI, FLWD…IFLA, LLLL…SFFF, VVLT…TFVL, and IIGK…LITL. The ABC transporter 2 domain occupies 1807 to 2039; that stretch reads LVLRDLTKVY…FGAGHTLTLR (233 aa). An ATP-binding site is contributed by 1841-1848; sequence GVNGAGKT. The segment at 2118 to 2159 is disordered; the sequence is QGEEEESSRQEAEEEEVSKPGRQHPKRVSRFLEDPSSVETMI. Over residues 2119-2133 the composition is skewed to acidic residues; that stretch reads GEEEESSRQEAEEEE.

The protein belongs to the ABC transporter superfamily. ABCA family. N-glycosylated. As to expression, widely expressed with higher expression in brain, lung, adrenal gland, spleen and hematopoietic tissues (at protein level). In the brain, expressed in cortex, cerebellum, hippocampus, olfactory bulb, neurons, astrocytes and microglia (at protein level). Also expressed in adipocytes and macrophages (at protein level). Expressed in thymocytes (at protein level). Highly expressed in spleen and hematopoietic tissues. Expressed in brain, lung, macrophages, microglia, oligodendrocytes and neurons.

It is found in the cell membrane. Its subcellular location is the golgi apparatus membrane. The protein resides in the early endosome membrane. It localises to the cytoplasm. The protein localises to the cell projection. It is found in the ruffle membrane. Its subcellular location is the phagocytic cup. Probable ATP-binding cassette (ABC) transporter that plays a role in lipid homeostasis and macrophage-mediated phagocytosis. Binds APOA1 and may function in apolipoprotein-mediated phospholipid efflux from cells. May also mediate cholesterol efflux. May regulate cellular ceramide homeostasis during keratinocyte differentiation. Involved in lipid raft organization and CD1D localization on thymocytes and antigen-presenting cells, which plays an important role in natural killer T-cell development and activation. Plays a role in phagocytosis of apoptotic cells by macrophages. Macrophage phagocytosis is stimulated by APOA1 or APOA2, probably by stabilization of ABCA7. Also involved in phagocytic clearance of amyloid-beta by microglia cells and macrophages. Further limits amyloid-beta production by playing a role in the regulation of amyloid-beta A4 precursor protein (APP) endocytosis and/or processing. This is ATP-binding cassette sub-family A member 7 (Abca7) from Mus musculus (Mouse).